A 278-amino-acid chain; its full sequence is MEPRAADGCFLGDVGFWVERTPVHEAAQRGESLQLQQLIESGACVNQVTVDSITPLHAASLQGQARCVQLLLAAGAQVDARNIDGSTPLCDACASGSIECVKLLLSYGAKVNPPLYTASPLHEACMSGSSECVRLLIDVGANLEAHDCHFGTPLHVACAREHLDCVKVLLNAGANVNAAKLHETALHHAAKVKNVDLIEMLIEFGGNIYARDNRGKKPSDYTWSSSAPAKCFEYYEKTPLTLSQLCRVNLRKATGVRGLEKIAKLNIPPRLIDYLSYN.

6 ANK repeats span residues 18-47 (VERT…CVNQ), 51-80 (DSIT…QVDA), 84-113 (DGST…KVNP), 116-145 (YTAS…NLEA), 149-178 (HFGT…NVNA), and 181-210 (LHET…NIYA). The region spanning 229-278 (AKCFEYYEKTPLTLSQLCRVNLRKATGVRGLEKIAKLNIPPRLIDYLSYN) is the SOCS box domain.

It belongs to the ankyrin SOCS box (ASB) family.

It participates in protein modification; protein ubiquitination. In terms of biological role, may be a substrate-recognition component of a SCF-like ECS (Elongin-Cullin-SOCS-box protein) E3 ubiquitin-protein ligase complex which mediates the ubiquitination and subsequent proteasomal degradation of target proteins. The protein is Ankyrin repeat and SOCS box protein 13 (ASB13) of Homo sapiens (Human).